A 129-amino-acid polypeptide reads, in one-letter code: Iron-sulfur cluster assembly 1 homolog, mitochondrial (129 aa).

Residues 1–12 (MASSVVRATVRA) constitute a mitochondrion transit peptide. Residues Cys57, Cys121, and Cys123 each contribute to the Fe cation site.

It belongs to the HesB/IscA family.

The protein localises to the mitochondrion. Involved in the maturation of mitochondrial 4Fe-4S proteins functioning late in the iron-sulfur cluster assembly pathway. Probably involved in the binding of an intermediate of Fe/S cluster assembly. In Gallus gallus (Chicken), this protein is Iron-sulfur cluster assembly 1 homolog, mitochondrial (ISCA1).